Here is a 706-residue protein sequence, read N- to C-terminus: Serine/threonine-protein kinase BUR1 (706 aa).

A Protein kinase domain is found at 38 to 339 (YKPLGKIGEG…AIGGKNHAYF (302 aa)). ATP contacts are provided by residues 44–52 (IGEGTFGEV) and Lys-67. The active-site Proton acceptor is Asp-168. Composition is skewed to basic and acidic residues over residues 360–523 (LDNH…RDSR), 545–570 (DYDR…DMTR), and 594–623 (DKVE…KSRD). The segment at 360 to 706 (LDNHKRREQE…YGRKRPRIER (347 aa)) is disordered. The span at 625-648 (GPPPGPPLPADGPPPPPSSNPPRP) shows a compositional bias: pro residues. The segment covering 659-706 (WRRDSRDRRESRDRDGRDRDGRDRRLSSSRYARDEFDEYGRKRPRIER) has biased composition (basic and acidic residues).

Belongs to the protein kinase superfamily. CMGC Ser/Thr protein kinase family. CDC2/CDKX subfamily.

The protein localises to the nucleus. The catalysed reaction is L-seryl-[protein] + ATP = O-phospho-L-seryl-[protein] + ADP + H(+). It carries out the reaction L-threonyl-[protein] + ATP = O-phospho-L-threonyl-[protein] + ADP + H(+). It catalyses the reaction [DNA-directed RNA polymerase] + ATP = phospho-[DNA-directed RNA polymerase] + ADP + H(+). Serine/threonine-protein kinase involved in transcription regulation. Phosphorylates the UBC2/RAD6 ubiquitin-conjugating enzyme (E2), leading to monoubiquitination of histone H2B and the silencing of telomeric-associated genes. Also required for histone H3 methylation. Necessary for the recovery from pheromone-induced growth arrest in the cell cycle G1 phase. This chain is Serine/threonine-protein kinase BUR1 (BUR1), found in Yarrowia lipolytica (strain CLIB 122 / E 150) (Yeast).